A 557-amino-acid chain; its full sequence is UvrABC system protein C (557 aa).

The region spanning Glu-14–Val-89 is the GIY-YIG domain. The 36-residue stretch at Glu-194–Val-229 folds into the UVR domain.

It belongs to the UvrC family. As to quaternary structure, interacts with UvrB in an incision complex.

The protein localises to the cytoplasm. Its function is as follows. The UvrABC repair system catalyzes the recognition and processing of DNA lesions. UvrC both incises the 5' and 3' sides of the lesion. The N-terminal half is responsible for the 3' incision and the C-terminal half is responsible for the 5' incision. The protein is UvrABC system protein C of Thermotoga sp. (strain RQ2).